The chain runs to 456 residues: Phosphomethylpyrimidine synthase (456 aa).

Residues asparagine 80, methionine 109, tyrosine 139, histidine 175, 195–197, 236–239, and glutamate 275 contribute to the substrate site; these read SRG and DSLR. A Zn(2+)-binding site is contributed by histidine 279. Residue tyrosine 302 coordinates substrate. Zn(2+) is bound at residue histidine 343. [4Fe-4S] cluster is bound by residues cysteine 423, cysteine 426, and cysteine 431.

Belongs to the ThiC family. [4Fe-4S] cluster serves as cofactor.

It catalyses the reaction 5-amino-1-(5-phospho-beta-D-ribosyl)imidazole + S-adenosyl-L-methionine = 4-amino-2-methyl-5-(phosphooxymethyl)pyrimidine + CO + 5'-deoxyadenosine + formate + L-methionine + 3 H(+). Its pathway is cofactor biosynthesis; thiamine diphosphate biosynthesis. Catalyzes the synthesis of the hydroxymethylpyrimidine phosphate (HMP-P) moiety of thiamine from aminoimidazole ribotide (AIR) in a radical S-adenosyl-L-methionine (SAM)-dependent reaction. This Synechococcus sp. (strain ATCC 27144 / PCC 6301 / SAUG 1402/1) (Anacystis nidulans) protein is Phosphomethylpyrimidine synthase.